The chain runs to 244 residues: Probable transcriptional regulatory protein CHY_1525 (244 aa).

It belongs to the TACO1 family.

It is found in the cytoplasm. The protein is Probable transcriptional regulatory protein CHY_1525 of Carboxydothermus hydrogenoformans (strain ATCC BAA-161 / DSM 6008 / Z-2901).